Consider the following 158-residue polypeptide: Regulator of sigma D (158 aa).

It belongs to the Rsd/AlgQ family. Interacts with RpoD.

The protein localises to the cytoplasm. Binds RpoD and negatively regulates RpoD-mediated transcription activation by preventing the interaction between the primary sigma factor RpoD with the catalytic core of the RNA polymerase and with promoter DNA. May be involved in replacement of the RNA polymerase sigma subunit from RpoD to RpoS during the transition from exponential growth to the stationary phase. This chain is Regulator of sigma D, found in Escherichia coli (strain UTI89 / UPEC).